A 609-amino-acid chain; its full sequence is Phosphoprotein 85 (609 aa).

The segment at 461–609 (QNEGRASSRA…RSTETNDERL (149 aa)) is disordered. Over residues 465 to 478 (RASSRASSSHSTST) the composition is skewed to low complexity. A compositionally biased stretch (polar residues) spans 484–495 (PQSGRSTPTSIL). 2 stretches are compositionally biased toward low complexity: residues 503 to 513 (SNSRSSSVSFS) and 552 to 563 (SPQSASSNNSMS). A compositionally biased stretch (basic and acidic residues) spans 600–609 (RSTETNDERL).

Belongs to the herpesviridae pp85 family. In terms of processing, phosphorylated.

The protein resides in the virion tegument. Its subcellular location is the host cytoplasm. The chain is Phosphoprotein 85 (U14) from Homo sapiens (Human).